The primary structure comprises 114 residues: Snake venom vascular endothelial growth factor (114 aa).

Q1 carries the pyrrolidone carboxylic acid modification. 3 cysteine pairs are disulfide-bonded: C14–C56, C45–C91, and C49–C93. The segment at 92 to 114 is disordered; sequence ECRPGSTVNNGKRKKNPKEGEPR.

Belongs to the PDGF/VEGF growth factor family. Snake venom VEGF subfamily. Homodimer; disulfide-linked. Interacts with human VEGF receptor 1/FLT1. Interacts with human VEGF receptor 2/KDR. Expressed by venom gland.

The protein localises to the secreted. Functionally, snake venom vascular endothelial growth factor (svVEGF) that may contribute to venom dispersion and prey subjugation by inducing vascular permeability and hypotension. Induces an increase in capillary permeability after intradermal injection, as well as a drastic hypotensive effect after intravenous injection. The hypotension is mediated by nitric oxide (NO), which is produced by VEGF-activated endothelium NO synthase. Induces angiogenesis and migration of human vascular endothelial cells in vitro. Exhibits angiogenic activity by inducing human umbilical vein endothelial cells (HUVEC) to develop vessels in vitro. Induces cellular migration of HUVEC cells towards a wound in scratch assays, enhancing wound closure after 12 h by 49.5%. Induces dose-dependent leukocyte recruitment to the peritoneal cavity leading to increased vascular permeability in mice. This is Snake venom vascular endothelial growth factor from Crotalus durissus terrificus (South American rattlesnake).